The primary structure comprises 79 residues: UPF0180 protein BCAH187_A1552 (79 aa).

The protein belongs to the UPF0180 family.

The protein is UPF0180 protein BCAH187_A1552 of Bacillus cereus (strain AH187).